A 57-amino-acid polypeptide reads, in one-letter code: Large ribosomal subunit protein bL32 (57 aa).

Residues 1 to 16 (MAVQKSRKTRSKRGMR) show a composition bias toward basic residues. A disordered region spans residues 1-45 (MAVQKSRKTRSKRGMRRSHDALTAPAQLSVDATSGETHRRHHMTA).

Belongs to the bacterial ribosomal protein bL32 family.

This Psychromonas ingrahamii (strain DSM 17664 / CCUG 51855 / 37) protein is Large ribosomal subunit protein bL32.